We begin with the raw amino-acid sequence, 194 residues long: uncharacterized protein (194 aa).

2 disordered regions span residues 52 to 71 (KGRT…EKYK) and 86 to 194 (AEAL…DGGS). Polar residues-rich tracts occupy residues 53–63 (GRTTQSAINSE), 98–111 (ALTS…SSTN), and 119–132 (IAHS…TSPA). Over residues 133 to 169 (NRHRRKEKERTRSNHRHGSHRRHEPYRTHLSRHHRHS) the composition is skewed to basic residues. Over residues 175 to 194 (SKRDDRYERRREHSPNDGGS) the composition is skewed to basic and acidic residues.

This is an uncharacterized protein from Schizosaccharomyces pombe (strain 972 / ATCC 24843) (Fission yeast).